The following is a 582-amino-acid chain: Aspartate--tRNA(Asp/Asn) ligase (582 aa).

E177 provides a ligand contact to L-aspartate. The aspartate stretch occupies residues 201–204; that stretch reads QLFK. R223 is an L-aspartate binding site. ATP-binding positions include 223–225 and Q232; that span reads RDE. H447 contributes to the L-aspartate binding site. ATP is bound at residue E481. R488 is an L-aspartate binding site. 533–536 serves as a coordination point for ATP; sequence GLDR.

Belongs to the class-II aminoacyl-tRNA synthetase family. Type 1 subfamily. In terms of assembly, homodimer.

The protein localises to the cytoplasm. It catalyses the reaction tRNA(Asx) + L-aspartate + ATP = L-aspartyl-tRNA(Asx) + AMP + diphosphate. In terms of biological role, aspartyl-tRNA synthetase with relaxed tRNA specificity since it is able to aspartylate not only its cognate tRNA(Asp) but also tRNA(Asn). Reaction proceeds in two steps: L-aspartate is first activated by ATP to form Asp-AMP and then transferred to the acceptor end of tRNA(Asp/Asn). This chain is Aspartate--tRNA(Asp/Asn) ligase, found in Chlamydia trachomatis serovar A (strain ATCC VR-571B / DSM 19440 / HAR-13).